The following is a 284-amino-acid chain: Nucleotide-binding protein CPS_4546 (284 aa).

8–15 (GRSGSGKS) contacts ATP. 56 to 59 (DVRN) contributes to the GTP binding site.

The protein belongs to the RapZ-like family.

Functionally, displays ATPase and GTPase activities. The polypeptide is Nucleotide-binding protein CPS_4546 (Colwellia psychrerythraea (strain 34H / ATCC BAA-681) (Vibrio psychroerythus)).